An 89-amino-acid chain; its full sequence is Small ribosomal subunit protein uS19 (89 aa).

The protein belongs to the universal ribosomal protein uS19 family.

Protein S19 forms a complex with S13 that binds strongly to the 16S ribosomal RNA. In Xylella fastidiosa (strain 9a5c), this protein is Small ribosomal subunit protein uS19.